A 1040-amino-acid chain; its full sequence is DNA mismatch repair protein MutS (1040 aa).

The span at 1-10 (MPVKPSAQNN) shows a compositional bias: polar residues. 2 disordered regions span residues 1-22 (MPVK…SVPV) and 130-157 (ATGT…SKST). Positions 11–22 (SPSKPTSKSVPV) are enriched in low complexity. The span at 130-143 (ATGTDNANNPSNAP) shows a compositional bias: polar residues. 759-766 (GPNMGGKS) is a binding site for ATP.

It belongs to the DNA mismatch repair MutS family.

In terms of biological role, this protein is involved in the repair of mismatches in DNA. It is possible that it carries out the mismatch recognition step. This protein has a weak ATPase activity. In Psychrobacter cryohalolentis (strain ATCC BAA-1226 / DSM 17306 / VKM B-2378 / K5), this protein is DNA mismatch repair protein MutS.